A 183-amino-acid polypeptide reads, in one-letter code: Inner membrane-spanning protein YciB (183 aa).

5 consecutive transmembrane segments (helical) span residues 19–39 (LYGV…QLIV), 53–73 (IMGI…DLNF), 76–96 (WKVT…QFVF), 121–141 (LGWA…SYYF), and 151–171 (TFGF…YLYP).

This sequence belongs to the YciB family.

The protein resides in the cell inner membrane. Functionally, plays a role in cell envelope biogenesis, maintenance of cell envelope integrity and membrane homeostasis. In Actinobacillus pleuropneumoniae serotype 7 (strain AP76), this protein is Inner membrane-spanning protein YciB.